Reading from the N-terminus, the 247-residue chain is Probable transcriptional regulatory protein GSU1074 (247 aa).

This sequence belongs to the TACO1 family.

Its subcellular location is the cytoplasm. This chain is Probable transcriptional regulatory protein GSU1074, found in Geobacter sulfurreducens (strain ATCC 51573 / DSM 12127 / PCA).